The chain runs to 162 residues: Transcription elongation factor GreA (162 aa).

A coiled-coil region spans residues 44–72 (ENAEYHAAKEKQSHIERRIAELSDILSRA).

Belongs to the GreA/GreB family.

Its function is as follows. Necessary for efficient RNA polymerase transcription elongation past template-encoded arresting sites. The arresting sites in DNA have the property of trapping a certain fraction of elongating RNA polymerases that pass through, resulting in locked ternary complexes. Cleavage of the nascent transcript by cleavage factors such as GreA or GreB allows the resumption of elongation from the new 3'terminus. GreA releases sequences of 2 to 3 nucleotides. The protein is Transcription elongation factor GreA of Nautilia profundicola (strain ATCC BAA-1463 / DSM 18972 / AmH).